Reading from the N-terminus, the 111-residue chain is Nucleoid-associated protein NMC1380 (111 aa).

The protein belongs to the YbaB/EbfC family. Homodimer.

It localises to the cytoplasm. The protein localises to the nucleoid. Functionally, binds to DNA and alters its conformation. May be involved in regulation of gene expression, nucleoid organization and DNA protection. The polypeptide is Nucleoid-associated protein NMC1380 (Neisseria meningitidis serogroup C / serotype 2a (strain ATCC 700532 / DSM 15464 / FAM18)).